Consider the following 103-residue polypeptide: Large ribosomal subunit protein bL21 (103 aa).

This sequence belongs to the bacterial ribosomal protein bL21 family. Part of the 50S ribosomal subunit. Contacts protein L20.

In terms of biological role, this protein binds to 23S rRNA in the presence of protein L20. The protein is Large ribosomal subunit protein bL21 of Erwinia tasmaniensis (strain DSM 17950 / CFBP 7177 / CIP 109463 / NCPPB 4357 / Et1/99).